The sequence spans 535 residues: MESMVNNLWSSWDTLSQATASTGGDMDAASVASKQSPQESKMAASSMIWSSFSEPQKTPPTKRASSSFFDDMFTSSKDHSTTLTDKMFERFLSMALPTTTTQDGEELQSILERIEMQKSRPQLSLNVMSKNAIQLLSRLSVPFVLIDQVIIIFSWSKPLYTLTFLNVATLLILKPILLLSLPFFYTCFEIIVPAYMKRHPPDKHTILQNRNPIPAEGPSVSHVDVPRPVPELSREFVLNSTDLQNHMLLYVMSYDFVTSLIVKYLYFKDENITIFIFVALLTSGTLLTLFGAQVLSAMLPFIKVTLSVGLWAATIAMHPNYRSTLLDMLYSEDTRLRLLMMSNRLELWLNKELNLREQKEVKETEIFELQHLDPETHNWQLICFSSDPYPANSHARLNNLPLLGTLHLSQVKPPEGWKFVDVETAVNTRSVDGWLLDLTPEGWIKENFLNETMDIDEDEKWCYDLVTKFSYQAGLTTNEKKTRGEVRRRRWIRYCVRDIWDEDDQMEETVAHRRNKSMESSNSLHPVKSIDSVDG.

The next 2 membrane-spanning stretches (helical) occupy residues 139–159 and 176–196; these read LSVPFVLIDQVIIIFSWSKPL and ILLLSLPFFYTCFEIIVPAYM. The N-linked (GlcNAc...) asparagine glycan is linked to Asn239. Residues 247–267 traverse the membrane as a helical segment; that stretch reads MLLYVMSYDFVTSLIVKYLYF. The N-linked (GlcNAc...) asparagine glycan is linked to Asn271. 2 consecutive transmembrane segments (helical) span residues 272–292 and 297–317; these read ITIFIFVALLTSGTLLTLFGA and AMLPFIKVTLSVGLWAATIAM. N-linked (GlcNAc...) asparagine glycosylation is found at Asn450 and Asn515. A disordered region spans residues 511–535; sequence AHRRNKSMESSNSLHPVKSIDSVDG.

Belongs to the PEX28-32 family. PEX29 subfamily.

Its subcellular location is the endoplasmic reticulum membrane. Functionally, with PEX23, contributes to the formation of endoplasmic reticulum-mitochondria junctions which are important for mitochondrial function. Involved in lipid dropplets formation. The chain is Peroxisomal membrane protein PEX29 from Ogataea parapolymorpha (strain ATCC 26012 / BCRC 20466 / JCM 22074 / NRRL Y-7560 / DL-1) (Yeast).